We begin with the raw amino-acid sequence, 138 residues long: Putative nickel-responsive regulator (138 aa).

Residues H78, H89, H91, and C97 each contribute to the Ni(2+) site.

It belongs to the transcriptional regulatory CopG/NikR family. It depends on Ni(2+) as a cofactor.

In terms of biological role, transcriptional regulator. In Thermococcus kodakarensis (strain ATCC BAA-918 / JCM 12380 / KOD1) (Pyrococcus kodakaraensis (strain KOD1)), this protein is Putative nickel-responsive regulator.